The sequence spans 1456 residues: DNA polymerase gamma, mitochondrial (1456 aa).

The N-terminal 41 residues, 1–41 (MLTPVRCRTVPNATVATAARVLRRANLFSRYPRQLGHLRWD), are a transit peptide targeting the mitochondrion. Disordered regions lie at residues 1200-1266 (APEM…SLDD) and 1308-1443 (AVTT…SWKP). Low complexity predominate over residues 1204 to 1239 (AAVPSTSSESKSKASATTSTTTTENATASPSSSSNV). The segment covering 1315–1325 (PEPPTNPPPVA) has biased composition (pro residues). 2 stretches are compositionally biased toward low complexity: residues 1346–1371 (PKNPTPTLTPTTKKSNPTSTPTTPKP) and 1411–1428 (TASVGGRATTTTATATAT).

The protein belongs to the DNA polymerase type-A family. Mg(2+) serves as cofactor.

It is found in the mitochondrion. It catalyses the reaction DNA(n) + a 2'-deoxyribonucleoside 5'-triphosphate = DNA(n+1) + diphosphate. Involved in the replication of mitochondrial DNA. The polypeptide is DNA polymerase gamma, mitochondrial (mip-1) (Neurospora crassa (strain ATCC 24698 / 74-OR23-1A / CBS 708.71 / DSM 1257 / FGSC 987)).